The following is a 292-amino-acid chain: Acetylglutamate kinase (292 aa).

Residues 62-63 (GG), R84, and N188 each bind substrate.

Belongs to the acetylglutamate kinase family. ArgB subfamily.

The protein localises to the cytoplasm. The enzyme catalyses N-acetyl-L-glutamate + ATP = N-acetyl-L-glutamyl 5-phosphate + ADP. Its pathway is amino-acid biosynthesis; L-arginine biosynthesis; N(2)-acetyl-L-ornithine from L-glutamate: step 2/4. Its function is as follows. Catalyzes the ATP-dependent phosphorylation of N-acetyl-L-glutamate. This is Acetylglutamate kinase from Methanosarcina mazei (strain ATCC BAA-159 / DSM 3647 / Goe1 / Go1 / JCM 11833 / OCM 88) (Methanosarcina frisia).